The sequence spans 149 residues: Alpha-crystallin A chain (149 aa).

The 109-residue stretch at 41-149 (LFRSVLESGI…DASHGERPIP (109 aa)) folds into the sHSP domain. Zn(2+) contacts are provided by H89, E91, H96, and H143.

Belongs to the small heat shock protein (HSP20) family. In terms of assembly, heteropolymer composed of three CRYAA and one CRYAB subunits. Inter-subunit bridging via zinc ions enhances stability, which is crucial as there is no protein turn over in the lens. Can also form homodimers and homotetramers (dimers of dimers) which serve as the building blocks of homooligomers. Within homooligomers, the zinc-binding motif is created from residues of 3 different molecules. His-89 and Glu-91 from one molecule are ligands of the zinc ion, and His-96 and His-143 residues from additional molecules complete the site with tetrahedral coordination geometry. Part of a complex required for lens intermediate filament formation composed of BFSP1, BFSP2 and CRYAA.

The protein localises to the cytoplasm. It is found in the nucleus. In terms of biological role, contributes to the transparency and refractive index of the lens. May act as a chaperone, preventing aggregation of various proteins under a wide range of stress conditions. The sequence is that of Alpha-crystallin A chain (CRYAA) from Columba livia (Rock dove).